Here is a 95-residue protein sequence, read N- to C-terminus: High mobility group nucleosome-binding domain-containing protein 3 (95 aa).

3 stretches are compositionally biased toward basic and acidic residues: residues 1 to 25, 39 to 53, and 62 to 72; these read MPKR…EPTR, PEPK…KEPG, and GKKEEKQEAGK. A disordered region spans residues 1–95; the sequence is MPKRKSPENA…EEVLSTNASH (95 aa). Ser6 bears the Phosphoserine mark. Ser78 is modified (phosphoserine).

This sequence belongs to the HMGN family. As to quaternary structure, interacts with the ligand binding domain of the thyroid receptor (TR) (in vitro). Requires the presence of thyroid hormone for its interaction. Interacts with transcriptional regulator SEHBP. Interacts with nucleosomes.

The protein localises to the nucleus. In terms of biological role, binds to nucleosomes, regulating chromatin structure and consequently, chromatin-dependent processes such as transcription, DNA replication and DNA repair. Affects both insulin and glucagon levels and modulates the expression of pancreatic genes involved in insulin secretion. Regulates the expression of the glucose transporter SLC2A2 by binding specifically to its promoter region and recruiting PDX1 and additional transcription factors. Regulates the expression of SLC6A9, a glycine transporter which regulates the glycine concentration in synaptic junctions in the central nervous system, by binding to its transcription start site. May play a role in ocular development and astrocyte function. In Rattus norvegicus (Rat), this protein is High mobility group nucleosome-binding domain-containing protein 3 (Hmgn3).